An 846-amino-acid chain; its full sequence is MAP7 domain-containing protein 1 (846 aa).

2 disordered regions span residues 1-153 (MESG…ERAK) and 186-210 (EQRLKAEQRRAALEERQRQKLEKNK). Residues 24 to 41 (EPRPSPEGDPSPPPPPTP) show a composition bias toward pro residues. Phosphothreonine occurs at positions 49 and 53. The residue at position 95 (Ser95) is a Phosphoserine. Thr99 carries the phosphothreonine modification. Residues 113-123 (RSSQPSPTTVP) are compositionally biased toward low complexity. Phosphoserine is present on residues Ser115 and Ser118. A Phosphothreonine modification is found at Thr120. Ser125 and Ser127 each carry phosphoserine. Positions 130 to 224 (AKQDVKKAGE…AAIQRSVKKT (95 aa)) form a coiled coil. The span at 132–153 (QDVKKAGERHKLAKERREERAK) shows a compositional bias: basic and acidic residues. Residues Ser256, Ser275, Ser315, Ser368, and Ser401 each carry the phosphoserine modification. A disordered region spans residues 318-816 (TLPRNGRDQG…KGTAGDKSLG (499 aa)). Over residues 407–437 (RRLEATPVQKKEKKDKERENEKEKSALARER) the composition is skewed to basic and acidic residues. A coiled-coil region spans residues 414–443 (VQKKEKKDKERENEKEKSALARERNLKKRQ). Phosphoserine is present on residues Ser444, Ser448, Ser454, and Ser460. Positions 460 to 471 (SPKSKARPSSPS) are enriched in low complexity. A Glycyl lysine isopeptide (Lys-Gly) (interchain with G-Cter in SUMO2) cross-link involves residue Lys462. Ser479 and Ser496 each carry phosphoserine. Positions 479–497 (SPCPSPGPGHALPPKPPSP) are enriched in pro residues. Over residues 523 to 539 (PEDKNHRKSRAAEEKEP) the composition is skewed to basic and acidic residues. Residues 542-556 (PASPAPSPVPSPTPA) are compositionally biased toward pro residues. 3 positions are modified to phosphoserine: Ser544, Ser548, and Ser552. Residue Thr554 is modified to Phosphothreonine. Residues 568 to 579 (PAETAVPAVPAA) are compositionally biased toward low complexity. Residues 599-740 (TTDREEATRL…AETKKQDAKE (142 aa)) are a coiled coil. Basic and acidic residues predominate over residues 600–740 (TDREEATRLL…AETKKQDAKE (141 aa)). The residue at position 818 (Thr818) is a Phosphothreonine.

It belongs to the MAP7 family.

The protein resides in the cytoplasm. The protein localises to the cytoskeleton. It is found in the spindle. Its subcellular location is the microtubule organizing center. It localises to the centrosome. The protein resides in the midbody. In terms of biological role, microtubule-stabilizing protein involved in the control of cell motility and neurite outgrowth. Facilitate microtubule stabilization through the maintenance of acetylated stable microtubules. The protein is MAP7 domain-containing protein 1 (Map7d1) of Mus musculus (Mouse).